The primary structure comprises 539 residues: Chaperonin GroEL 2 (539 aa).

ATP-binding positions include 30-33 (TLGP), K51, 87-91 (DGTTT), G415, 480-482 (NAA), and D496.

The protein belongs to the chaperonin (HSP60) family. In terms of assembly, forms a cylinder of 14 subunits composed of two heptameric rings stacked back-to-back. Interacts with the co-chaperonin GroES.

The protein resides in the cytoplasm. It catalyses the reaction ATP + H2O + a folded polypeptide = ADP + phosphate + an unfolded polypeptide.. Its function is as follows. Together with its co-chaperonin GroES, plays an essential role in assisting protein folding. The GroEL-GroES system forms a nano-cage that allows encapsulation of the non-native substrate proteins and provides a physical environment optimized to promote and accelerate protein folding. The chain is Chaperonin GroEL 2 from Sphingopyxis alaskensis (strain DSM 13593 / LMG 18877 / RB2256) (Sphingomonas alaskensis).